The chain runs to 180 residues: ATP synthase subunit b 2 (180 aa).

The helical transmembrane segment at 33 to 53 (IFWLLVTLVAIYFLLTRVALP) threads the bilayer.

Belongs to the ATPase B chain family. In terms of assembly, F-type ATPases have 2 components, F(1) - the catalytic core - and F(0) - the membrane proton channel. F(1) has five subunits: alpha(3), beta(3), gamma(1), delta(1), epsilon(1). F(0) has three main subunits: a(1), b(2) and c(10-14). The alpha and beta chains form an alternating ring which encloses part of the gamma chain. F(1) is attached to F(0) by a central stalk formed by the gamma and epsilon chains, while a peripheral stalk is formed by the delta and b chains.

The protein resides in the cell inner membrane. F(1)F(0) ATP synthase produces ATP from ADP in the presence of a proton or sodium gradient. F-type ATPases consist of two structural domains, F(1) containing the extramembraneous catalytic core and F(0) containing the membrane proton channel, linked together by a central stalk and a peripheral stalk. During catalysis, ATP synthesis in the catalytic domain of F(1) is coupled via a rotary mechanism of the central stalk subunits to proton translocation. In terms of biological role, component of the F(0) channel, it forms part of the peripheral stalk, linking F(1) to F(0). The b'-subunit is a diverged and duplicated form of b found in plants and photosynthetic bacteria. The sequence is that of ATP synthase subunit b 2 (atpF2) from Cereibacter sphaeroides (strain ATCC 17025 / ATH 2.4.3) (Rhodobacter sphaeroides).